The sequence spans 143 residues: Transcriptional regulator MraZ (143 aa).

SpoVT-AbrB domains lie at 5 to 47 and 76 to 119; these read EYQH…PQEE and ASEC…SKSE.

This sequence belongs to the MraZ family. In terms of assembly, forms oligomers.

It localises to the cytoplasm. Its subcellular location is the nucleoid. The sequence is that of Transcriptional regulator MraZ from Listeria monocytogenes serotype 4b (strain CLIP80459).